The primary structure comprises 182 residues: ATP synthase subunit delta (182 aa).

Belongs to the ATPase delta chain family. As to quaternary structure, F-type ATPases have 2 components, F(1) - the catalytic core - and F(0) - the membrane proton channel. F(1) has five subunits: alpha(3), beta(3), gamma(1), delta(1), epsilon(1). CF(0) has four main subunits: a(1), b(1), b'(1) and c(10-14). The alpha and beta chains form an alternating ring which encloses part of the gamma chain. F(1) is attached to F(0) by a central stalk formed by the gamma and epsilon chains, while a peripheral stalk is formed by the delta, b and b' chains.

It localises to the cellular thylakoid membrane. Functionally, f(1)F(0) ATP synthase produces ATP from ADP in the presence of a proton or sodium gradient. F-type ATPases consist of two structural domains, F(1) containing the extramembraneous catalytic core and F(0) containing the membrane proton channel, linked together by a central stalk and a peripheral stalk. During catalysis, ATP synthesis in the catalytic domain of F(1) is coupled via a rotary mechanism of the central stalk subunits to proton translocation. This protein is part of the stalk that links CF(0) to CF(1). It either transmits conformational changes from CF(0) to CF(1) or is implicated in proton conduction. The polypeptide is ATP synthase subunit delta (Synechococcus sp. (strain WH7803)).